A 139-amino-acid polypeptide reads, in one-letter code: Classical arabinogalactan protein 3 (139 aa).

An N-terminal signal peptide occupies residues M1–A21. Q22 carries the post-translational modification Pyrrolidone carboxylic acid. A disordered region spans residues T30–A115. Pro residues-rich tracts occupy residues A46–T77 and P97–A107. D116 carries GPI-anchor amidated aspartate lipidation. A propeptide spans S117–A139 (removed in mature form).

Belongs to the classical AGP family. Post-translationally, O-glycosylated on the hydroxyproline residues. In terms of tissue distribution, expressed at a low level in roots.

It localises to the cell membrane. Proteoglycan that seems to be implicated in diverse developmental roles such as differentiation, cell-cell recognition, embryogenesis and programmed cell death. The chain is Classical arabinogalactan protein 3 (AGP3) from Arabidopsis thaliana (Mouse-ear cress).